The sequence spans 201 residues: 3-isopropylmalate dehydratase small subunit (201 aa).

This sequence belongs to the LeuD family. LeuD type 1 subfamily. As to quaternary structure, heterodimer of LeuC and LeuD.

The catalysed reaction is (2R,3S)-3-isopropylmalate = (2S)-2-isopropylmalate. The protein operates within amino-acid biosynthesis; L-leucine biosynthesis; L-leucine from 3-methyl-2-oxobutanoate: step 2/4. Catalyzes the isomerization between 2-isopropylmalate and 3-isopropylmalate, via the formation of 2-isopropylmaleate. The protein is 3-isopropylmalate dehydratase small subunit of Shewanella woodyi (strain ATCC 51908 / MS32).